A 120-amino-acid polypeptide reads, in one-letter code: Small ribosomal subunit protein uS13 (120 aa).

The tract at residues 92–120 (HRKGLPVRGQTTKNNARTRKGKKKTVGSK) is disordered. The segment covering 107 to 120 (ARTRKGKKKTVGSK) has biased composition (basic residues).

It belongs to the universal ribosomal protein uS13 family. Part of the 30S ribosomal subunit. Forms a loose heterodimer with protein S19. Forms two bridges to the 50S subunit in the 70S ribosome.

Located at the top of the head of the 30S subunit, it contacts several helices of the 16S rRNA. In the 70S ribosome it contacts the 23S rRNA (bridge B1a) and protein L5 of the 50S subunit (bridge B1b), connecting the 2 subunits; these bridges are implicated in subunit movement. Contacts the tRNAs in the A and P-sites. The chain is Small ribosomal subunit protein uS13 from Helicobacter pylori (strain J99 / ATCC 700824) (Campylobacter pylori J99).